Here is a 120-residue protein sequence, read N- to C-terminus: uncharacterized protein (120 aa).

The N-terminal stretch at 1-22 (MSTSGMLFIFATFCPCFLSCCA) is a signal peptide. At 23–59 (FMSHWKLKDFSFRFLRMCGERSLVVCYPLKLLKQIRS) the chain is on the extracellular side. Residues 60 to 80 (LFSIAIGHLSLMLIEGSANLL) form a helical membrane-spanning segment. Residues 81–120 (SLEEISRTLLRILDFVGNKNMRTYLEVPLCRWHISQARPN) are Cytoplasmic-facing.

It localises to the membrane. This is an uncharacterized protein from Schizosaccharomyces pombe (strain 972 / ATCC 24843) (Fission yeast).